Here is a 156-residue protein sequence, read N- to C-terminus: Small ribosomal subunit protein uS7 (156 aa).

Belongs to the universal ribosomal protein uS7 family. Part of the 30S ribosomal subunit. Contacts proteins S9 and S11.

One of the primary rRNA binding proteins, it binds directly to 16S rRNA where it nucleates assembly of the head domain of the 30S subunit. Is located at the subunit interface close to the decoding center, probably blocks exit of the E-site tRNA. This chain is Small ribosomal subunit protein uS7, found in Synechocystis sp. (strain ATCC 27184 / PCC 6803 / Kazusa).